The sequence spans 127 residues: Large ribosomal subunit protein bL12 (127 aa).

The disordered stretch occupies residues Gly96–Lys127. Residues Ala104–Lys127 show a composition bias toward basic and acidic residues.

Belongs to the bacterial ribosomal protein bL12 family. In terms of assembly, homodimer. Part of the ribosomal stalk of the 50S ribosomal subunit. Forms a multimeric L10(L12)X complex, where L10 forms an elongated spine to which 2 to 4 L12 dimers bind in a sequential fashion. Binds GTP-bound translation factors.

Functionally, forms part of the ribosomal stalk which helps the ribosome interact with GTP-bound translation factors. Is thus essential for accurate translation. The chain is Large ribosomal subunit protein bL12 from Oleidesulfovibrio alaskensis (strain ATCC BAA-1058 / DSM 17464 / G20) (Desulfovibrio alaskensis).